A 307-amino-acid chain; its full sequence is Acyl transferase (307 aa).

Catalysis depends on charge relay system residues serine 116, aspartate 213, and histidine 243.

It belongs to the LuxD family.

It functions in the pathway lipid metabolism; fatty acid reduction for biolumincescence. Functionally, acyl transferase is part of the fatty acid reductase system required for aldehyde biosynthesis; it produces fatty acids for the luminescent reaction. This chain is Acyl transferase, found in Aliivibrio fischeri (Vibrio fischeri).